The sequence spans 237 residues: Ribosomal RNA small subunit methyltransferase G (237 aa).

Residues Gly78, Phe83, 129-130 (AE), and Arg148 each bind S-adenosyl-L-methionine. Residues 216 to 237 (SKKKETPNKYPRKAGTPNKKPL) form a disordered region.

Belongs to the methyltransferase superfamily. RNA methyltransferase RsmG family.

The protein resides in the cytoplasm. Specifically methylates the N7 position of a guanine in 16S rRNA. The protein is Ribosomal RNA small subunit methyltransferase G of Streptococcus agalactiae serotype III (strain NEM316).